We begin with the raw amino-acid sequence, 885 residues long: Chromatin assembly factor 1 subunit A-B (885 aa).

4 disordered regions span residues 1-24, 115-157, 176-361, and 536-605; these read MPGK…KMVQ, EDSN…NEEC, LDKP…EEEK, and VDSD…QKLK. Over residues 12-21 the composition is skewed to low complexity; it reads KSSTKSNTKK. Polar residues-rich tracts occupy residues 116–128, 134–157, and 182–193; these read DSNI…SPLN, QLAN…NEEC, and SAASCTSVSNFS. Low complexity-rich tracts occupy residues 211–227 and 237–254; these read VSVS…SPDV and SSPS…SNKT. Positions 251–376 form a coiled coil; that stretch reads SNKTSAEKKK…KAEITRFLQK (126 aa). Positions 255-361 are enriched in basic and acidic residues; sequence SAEKKKTKDK…EEKRLKEEEK (107 aa). Acidic residues-rich tracts occupy residues 536–548 and 557–573; these read VDSD…EEPG and ENED…DDDG. Residues 629–665 form a necessary for homodimerization, competence for chromatin assembly region; sequence CVWCDSKASEIRLLQKFSACILESPAVEEELTQDISS.

The protein belongs to the CHAF1A family. Homodimer.

The protein resides in the nucleus. In terms of biological role, involved in chromatin assembly in DNA replication and DNA repair. The protein is Chromatin assembly factor 1 subunit A-B (chaf1a-b) of Xenopus laevis (African clawed frog).